The sequence spans 307 residues: tRNA pseudouridine synthase B (307 aa).

The active-site Nucleophile is Asp38.

This sequence belongs to the pseudouridine synthase TruB family. Type 1 subfamily.

It catalyses the reaction uridine(55) in tRNA = pseudouridine(55) in tRNA. Its function is as follows. Responsible for synthesis of pseudouridine from uracil-55 in the psi GC loop of transfer RNAs. This is tRNA pseudouridine synthase B from Lachnoclostridium phytofermentans (strain ATCC 700394 / DSM 18823 / ISDg) (Clostridium phytofermentans).